The following is a 355-amino-acid chain: MFEVGGKCLAYHGPLLYEAKILRRWNPKLEKVEYSVPLKSGEEDGLPESMNREEFYYYIHYQGWKSSWDEWVSVDRIMELTEANIELKKQLVMEAKKASLAQQQKTKNGGSAKRGGGGAHSESNHGGRRSGSGDRRDSNAEERGIVPSEGPFRTSSVMSYNFSRNKLRIHIPMILESMLVDDWEIVTKEKKISNLPNPFPVETILDRFYKDVATRTTSPVELSLVEEYVYGLKQYFNEAIGNLLLYKLERLQYEQVFYPTPEQQQAMTPVERSLSGRRPGQLYGVLHLLRLISILPEMLSNCVGMDTQAINVILRHTEKLLLWLVDRIEDLLPHKVHKSYYTNTSSQYEGVALGL.

The 75-residue stretch at 3-77 folds into the Tudor-knot domain; the sequence is EVGGKCLAYH…WDEWVSVDRI (75 aa). Positions 98–150 are disordered; the sequence is ASLAQQQKTKNGGSAKRGGGGAHSESNHGGRRSGSGDRRDSNAEERGIVPSEG. The segment covering 131-144 has biased composition (basic and acidic residues); that stretch reads GSGDRRDSNAEERG. In terms of domain architecture, MRG spans 163 to 353; it reads SRNKLRIHIP…TSSQYEGVAL (191 aa).

The protein belongs to the MRG family. In terms of assembly, component of the NuA4 histone acetyltransferase complex.

It localises to the nucleus. Its function is as follows. Involved in deacetylation of histones, chromatin assembly and chromosome segregation. May act as a transcriptional oscillator, directing histone deacetylases to specific chromosomal domains. Component of the NuA4 histone acetyltransferase complex which is involved in transcriptional activation of selected genes principally by acetylation of nucleosomal histone H4 and H2A. The NuA4 complex is also involved in DNA repair. The sequence is that of Chromatin modification-related protein EAF3 (EAF3) from Candida glabrata (strain ATCC 2001 / BCRC 20586 / JCM 3761 / NBRC 0622 / NRRL Y-65 / CBS 138) (Yeast).